We begin with the raw amino-acid sequence, 270 residues long: Triosephosphate isomerase (270 aa).

Residue 27–29 (NWK) participates in substrate binding. The Electrophile role is filled by His-114. The active-site Proton acceptor is the Glu-184. Substrate is bound by residues Gly-190, Ser-230, and 251 to 252 (GG).

The protein belongs to the triosephosphate isomerase family. In terms of assembly, homodimer.

The protein resides in the cytoplasm. The catalysed reaction is D-glyceraldehyde 3-phosphate = dihydroxyacetone phosphate. It participates in carbohydrate biosynthesis; gluconeogenesis. Its pathway is carbohydrate degradation; glycolysis; D-glyceraldehyde 3-phosphate from glycerone phosphate: step 1/1. In terms of biological role, involved in the gluconeogenesis. Catalyzes stereospecifically the conversion of dihydroxyacetone phosphate (DHAP) to D-glyceraldehyde-3-phosphate (G3P). The chain is Triosephosphate isomerase from Chlamydia muridarum (strain MoPn / Nigg).